A 382-amino-acid chain; its full sequence is Glutamyl-tRNA reductase (382 aa).

Residues 38 to 41, S85, 90 to 92, and Q96 contribute to the substrate site; these read TCNR and ENQ. C39 serves as the catalytic Nucleophile. 164–169 contacts NADP(+); that stretch reads GAGEMG.

It belongs to the glutamyl-tRNA reductase family. As to quaternary structure, homodimer.

The enzyme catalyses (S)-4-amino-5-oxopentanoate + tRNA(Glu) + NADP(+) = L-glutamyl-tRNA(Glu) + NADPH + H(+). Its pathway is porphyrin-containing compound metabolism; protoporphyrin-IX biosynthesis; 5-aminolevulinate from L-glutamyl-tRNA(Glu): step 1/2. Catalyzes the NADPH-dependent reduction of glutamyl-tRNA(Glu) to glutamate 1-semialdehyde (GSA). The sequence is that of Glutamyl-tRNA reductase from Methanococcus maripaludis (strain C5 / ATCC BAA-1333).